The following is a 134-amino-acid chain: Small ribosomal subunit protein uS12 (134 aa).

A disordered region spans residues 1-27 (MPTIQQLVRKGRESFADKSKSPALNSC). Residues 10–20 (KGRESFADKSK) are compositionally biased toward basic and acidic residues. Residue Asp-89 is modified to 3-methylthioaspartic acid. The segment at 103–134 (DTAGVNGRTQRRSKYGAKRPKPGQAPAAKGKK) is disordered. The span at 111-123 (TQRRSKYGAKRPK) shows a compositional bias: basic residues. The segment covering 124 to 134 (PGQAPAAKGKK) has biased composition (low complexity).

This sequence belongs to the universal ribosomal protein uS12 family. In terms of assembly, part of the 30S ribosomal subunit. Contacts proteins S8 and S17. May interact with IF1 in the 30S initiation complex.

Functionally, with S4 and S5 plays an important role in translational accuracy. Its function is as follows. Interacts with and stabilizes bases of the 16S rRNA that are involved in tRNA selection in the A site and with the mRNA backbone. Located at the interface of the 30S and 50S subunits, it traverses the body of the 30S subunit contacting proteins on the other side and probably holding the rRNA structure together. The combined cluster of proteins S8, S12 and S17 appears to hold together the shoulder and platform of the 30S subunit. In Porphyromonas gingivalis (strain ATCC 33277 / DSM 20709 / CIP 103683 / JCM 12257 / NCTC 11834 / 2561), this protein is Small ribosomal subunit protein uS12.